Reading from the N-terminus, the 346-residue chain is uncharacterized protein (346 aa).

His-65 is a Zn(2+) binding site. Asp-67 is an active-site residue. Zn(2+) is bound at residue Asp-89. Glu-115 (proton acceptor) is an active-site residue. The Zn(2+) site is built by Glu-116, Glu-145, and His-319.

This sequence belongs to the peptidase M20A family. The cofactor is Zn(2+). Requires Co(2+) as cofactor.

This is an uncharacterized protein from Methanocaldococcus jannaschii (strain ATCC 43067 / DSM 2661 / JAL-1 / JCM 10045 / NBRC 100440) (Methanococcus jannaschii).